The primary structure comprises 191 residues: uncharacterized protein (191 aa).

The signal sequence occupies residues 1 to 23 (MKKTMSAITAAAAVTSCFTGFGA).

This is an uncharacterized protein from Bacillus subtilis (strain 168).